The sequence spans 139 residues: Large ribosomal subunit protein uL16 (139 aa).

It belongs to the universal ribosomal protein uL16 family. In terms of assembly, part of the 50S ribosomal subunit.

Functionally, binds 23S rRNA and is also seen to make contacts with the A and possibly P site tRNAs. In Prosthecochloris aestuarii (strain DSM 271 / SK 413), this protein is Large ribosomal subunit protein uL16.